The chain runs to 117 residues: 3',5'-cyclic-AMP phosphodiesterase 4A (117 aa).

Residues 42 to 79 (KQNEVEIPSPTMKDREPQEAPRQRPCQQLPPPVPHLQP) are disordered. Positions 53–63 (MKDREPQEAPR) are enriched in basic and acidic residues. The catalytic stretch occupies residues 78-117 (QPMSQITGVKRLSHNSGLNNASIPRFGVKTDQEELLAQEL).

Belongs to the cyclic nucleotide phosphodiesterase family. PDE4 subfamily. As to quaternary structure, interacts with LYN (via SH3 domain). Interacts with ARRB2. The cofactor is Zn(2+). Mg(2+) serves as cofactor. Mn(2+) is required as a cofactor. Post-translationally, proteolytically cleaved by CASP3.

It localises to the cytoplasm. The protein localises to the cytosol. The protein resides in the membrane. The enzyme catalyses 3',5'-cyclic AMP + H2O = AMP + H(+). It functions in the pathway purine metabolism; 3',5'-cyclic AMP degradation; AMP from 3',5'-cyclic AMP: step 1/1. Hydrolyzes the second messenger 3',5'-cyclic AMP (cAMP), which is a key regulator of many important physiological processes. This Cavia porcellus (Guinea pig) protein is 3',5'-cyclic-AMP phosphodiesterase 4A (PDE4A).